The sequence spans 1202 residues: Caffeine-induced protein 16 (1202 aa).

The PAP-associated domain occupies 1105 to 1159 (NIALLLRGFFCYYGLTTQYSFDWEAYMIDISSSQLKRKSTEFKDCPFVVLDPFLK).

This Schizosaccharomyces pombe (strain 972 / ATCC 24843) (Fission yeast) protein is Caffeine-induced protein 16 (cid16).